Reading from the N-terminus, the 289-residue chain is Elongation factor Ts (289 aa).

The involved in Mg(2+) ion dislocation from EF-Tu stretch occupies residues Thr-80–Val-83.

It belongs to the EF-Ts family.

Its subcellular location is the cytoplasm. Associates with the EF-Tu.GDP complex and induces the exchange of GDP to GTP. It remains bound to the aminoacyl-tRNA.EF-Tu.GTP complex up to the GTP hydrolysis stage on the ribosome. The protein is Elongation factor Ts of Francisella tularensis subsp. tularensis (strain FSC 198).